A 93-amino-acid chain; its full sequence is DNA-directed RNA polymerase subunit omega (93 aa).

It belongs to the RNA polymerase subunit omega family. The RNAP catalytic core consists of 2 alpha, 1 beta, 1 beta' and 1 omega subunit. When a sigma factor is associated with the core the holoenzyme is formed, which can initiate transcription.

The enzyme catalyses RNA(n) + a ribonucleoside 5'-triphosphate = RNA(n+1) + diphosphate. Functionally, promotes RNA polymerase assembly. Latches the N- and C-terminal regions of the beta' subunit thereby facilitating its interaction with the beta and alpha subunits. In Actinobacillus pleuropneumoniae serotype 7 (strain AP76), this protein is DNA-directed RNA polymerase subunit omega.